A 339-amino-acid polypeptide reads, in one-letter code: 3-isopropylmalate dehydrogenase (339 aa).

Substrate is bound by residues Arg87, Arg97, Arg124, and Asp214. Mg(2+)-binding residues include Asp214, Asp238, and Asp242. Residue 274 to 286 (GSAPDIAGQGIAD) coordinates NAD(+).

It belongs to the isocitrate and isopropylmalate dehydrogenases family. LeuB type 2 subfamily. In terms of assembly, homodimer. Mg(2+) serves as cofactor. It depends on Mn(2+) as a cofactor.

The protein resides in the cytoplasm. The enzyme catalyses (2R,3S)-3-isopropylmalate + NAD(+) = 4-methyl-2-oxopentanoate + CO2 + NADH. Its pathway is amino-acid biosynthesis; L-leucine biosynthesis; L-leucine from 3-methyl-2-oxobutanoate: step 3/4. Its function is as follows. Catalyzes the oxidation of 3-carboxy-2-hydroxy-4-methylpentanoate (3-isopropylmalate) to 3-carboxy-4-methyl-2-oxopentanoate. The product decarboxylates to 4-methyl-2 oxopentanoate. In Mycobacterium ulcerans (strain Agy99), this protein is 3-isopropylmalate dehydrogenase.